We begin with the raw amino-acid sequence, 211 residues long: Glutathione S-transferase class-mu 28 kDa isozyme (211 aa).

Positions 4 to 86 constitute a GST N-terminal domain; that stretch reads DHIKVIYFNG…YMAKKHHMMG (83 aa). Tyr-10, Arg-16, Trp-41, Lys-45, Leu-53, Glu-70, Ser-71, and Asp-104 together coordinate glutathione. A GST C-terminal domain is found at 88–211; it reads TDEEYYNVEK…YLSDRAATPF (124 aa).

This sequence belongs to the GST superfamily. Mu family. As to quaternary structure, homodimer.

The enzyme catalyses RX + glutathione = an S-substituted glutathione + a halide anion + H(+). Functionally, conjugation of reduced glutathione to a wide number of exogenous and endogenous hydrophobic electrophiles. GST isoenzymes appear to play a central role in the parasite detoxification system. Other functions are also suspected including a role in increasing the solubility of haematin in the parasite gut. The chain is Glutathione S-transferase class-mu 28 kDa isozyme from Schistosoma bovis (Blood fluke).